A 523-amino-acid polypeptide reads, in one-letter code: 2-isopropylmalate synthase (523 aa).

The Pyruvate carboxyltransferase domain occupies 5–267; that stretch reads VIIFDTTLRD…HTAINHQEIW (263 aa). Mn(2+)-binding residues include Asp14, His202, His204, and Asn238. The tract at residues 392–523 is regulatory domain; sequence RLDYFSVQSG…QHNENNKETV (132 aa).

It belongs to the alpha-IPM synthase/homocitrate synthase family. LeuA type 1 subfamily. In terms of assembly, homodimer. It depends on Mn(2+) as a cofactor.

The protein localises to the cytoplasm. It catalyses the reaction 3-methyl-2-oxobutanoate + acetyl-CoA + H2O = (2S)-2-isopropylmalate + CoA + H(+). The protein operates within amino-acid biosynthesis; L-leucine biosynthesis; L-leucine from 3-methyl-2-oxobutanoate: step 1/4. Its function is as follows. Catalyzes the condensation of the acetyl group of acetyl-CoA with 3-methyl-2-oxobutanoate (2-ketoisovalerate) to form 3-carboxy-3-hydroxy-4-methylpentanoate (2-isopropylmalate). This Shigella sonnei (strain Ss046) protein is 2-isopropylmalate synthase.